A 1609-amino-acid chain; its full sequence is Chitin synthase 5 (1609 aa).

Disordered regions lie at residues 1–188 (MNPF…DRER), 248–280 (SGLGVTGPTNVPPGGLGRAPPLRRGKSLLGRDE), and 294–320 (VSLRRKQSKSGNKPSKEVPRDLGESKT). Residues 1-326 (MNPFESLPDA…ESKTSRIAPG (326 aa)) lie on the Cytoplasmic side of the membrane. Polar residues predominate over residues 34-44 (PGSTGRPQNPI). Over residues 61 to 82 (PQQQQQQQQQQQQQQQRSQQPF) the composition is skewed to low complexity. A compositionally biased stretch (polar residues) spans 100-111 (AYLNSTSSQPTQ). Residues 134-146 (DSVKSYGDDKRSI) are compositionally biased toward basic and acidic residues. Polar residues predominate over residues 147-163 (NDPNSSSTALTQVNSLD). Low complexity predominate over residues 253–267 (TGPTNVPPGGLGRAP). Basic and acidic residues predominate over residues 307 to 320 (PSKEVPRDLGESKT). Residues 327–347 (PVGGWMIYCYILTICCPGPFL) form a helical membrane-spanning segment. Topologically, residues 348–364 (RIFGIRTPEQQRAWREK) are extracellular. A helical membrane pass occupies residues 365-385 (MGLIGIITLIMAAVGFLTFGF). At 386–624 (TQTVCGQQPD…ASKVELYLSL (239 aa)) the chain is on the cytoplasmic side. The chain crosses the membrane as a helical span at residues 625-645 (VFIIGVVAIKFFMAVMFGWFI). The Extracellular segment spans residues 646-1176 (SWRLGNYANE…MRFVVFMELT (531 aa)). Asn654 carries N-linked (GlcNAc...) asparagine glycosylation. Residues 729–767 (GVASPLGGSPPGSPSVAGGRSSASLAPAHSRRSSFSGSP) form a disordered region. Residues 742-752 (PSVAGGRSSAS) are compositionally biased toward low complexity. 2 N-linked (GlcNAc...) asparagine glycosylation sites follow: Asn1015 and Asn1144. A helical transmembrane segment spans residues 1177-1197 (GTLVLPAAIAFTLYVVVQAFL). Residues 1198–1202 (PNVPT) are Cytoplasmic-facing. Residues 1203 to 1223 (PTIPLILLALILGLPGILIVV) traverse the membrane as a helical segment. At 1224-1227 (TSRK) the chain is on the extracellular side. The chain crosses the membrane as a helical span at residues 1228 to 1248 (IAYVGWMLIYLLSLPIWNFVL). The Cytoplasmic portion of the chain corresponds to 1249–1609 (PLYAYWHMDD…PPGAAPPSFD (361 aa)). 2 disordered regions span residues 1354–1381 (PNAMSSSSASQFGPDVSEVSHSKSPSGA) and 1399–1609 (TDAK…PSFD). Polar residues-rich tracts occupy residues 1502–1514 (NVSTEQRYPTVSE) and 1530–1552 (GSASPTPAQQGFNAANSNQQTRP). The segment covering 1568 to 1588 (AQGVRQVQRGARRSQMPNSAA) has biased composition (low complexity).

The protein belongs to the chitin synthase family. Class IV subfamily.

Its subcellular location is the cell membrane. It localises to the cytoplasmic vesicle membrane. It carries out the reaction [(1-&gt;4)-N-acetyl-beta-D-glucosaminyl](n) + UDP-N-acetyl-alpha-D-glucosamine = [(1-&gt;4)-N-acetyl-beta-D-glucosaminyl](n+1) + UDP + H(+). Functionally, polymerizes chitin, a structural polymer of the cell wall and septum, by transferring the sugar moiety of UDP-GlcNAc to the non-reducing end of the growing chitin polymer. The chain is Chitin synthase 5 from Mycosarcoma maydis (Corn smut fungus).